Consider the following 367-residue polypeptide: Alanine racemase (367 aa).

The active-site Proton acceptor; specific for D-alanine is the Lys40. An N6-(pyridoxal phosphate)lysine modification is found at Lys40. Substrate is bound at residue Arg136. The Proton acceptor; specific for L-alanine role is filled by Tyr263. Met310 serves as a coordination point for substrate.

It belongs to the alanine racemase family. Pyridoxal 5'-phosphate is required as a cofactor.

The catalysed reaction is L-alanine = D-alanine. The protein operates within amino-acid biosynthesis; D-alanine biosynthesis; D-alanine from L-alanine: step 1/1. Functionally, catalyzes the interconversion of L-alanine and D-alanine. May also act on other amino acids. In Streptococcus suis (strain 98HAH33), this protein is Alanine racemase (alr).